The sequence spans 162 residues: 3-dehydroquinate dehydratase (162 aa).

Residue Y22 is the Proton acceptor of the active site. Substrate is bound by residues N73, H79, and D86. H99 serves as the catalytic Proton donor. Substrate contacts are provided by residues 100–101 and R110; that span reads LS.

This sequence belongs to the type-II 3-dehydroquinase family. As to quaternary structure, homododecamer.

It carries out the reaction 3-dehydroquinate = 3-dehydroshikimate + H2O. The protein operates within metabolic intermediate biosynthesis; chorismate biosynthesis; chorismate from D-erythrose 4-phosphate and phosphoenolpyruvate: step 3/7. Catalyzes a trans-dehydration via an enolate intermediate. This chain is 3-dehydroquinate dehydratase, found in Sulfurovum sp. (strain NBC37-1).